Consider the following 364-residue polypeptide: Dermonecrotic toxin SPH (364 aa).

Residues 1-17 form the signal peptide; that stretch reads MIRIFALITALAITVKC. The Nucleophile role is filled by His-29. Mg(2+) contacts are provided by Glu-49 and Asp-51. His-65 is an active-site residue. 2 cysteine pairs are disulfide-bonded: Cys-69-Cys-75 and Cys-71-Cys-215. Asp-109 is a Mg(2+) binding site.

It belongs to the arthropod phospholipase D family. Mg(2+) is required as a cofactor. Expressed in salivary glands.

Its subcellular location is the secreted. The catalysed reaction is an N-(acyl)-sphingosylphosphocholine = an N-(acyl)-sphingosyl-1,3-cyclic phosphate + choline. It catalyses the reaction an N-(acyl)-sphingosylphosphoethanolamine = an N-(acyl)-sphingosyl-1,3-cyclic phosphate + ethanolamine. The enzyme catalyses a 1-acyl-sn-glycero-3-phosphocholine = a 1-acyl-sn-glycero-2,3-cyclic phosphate + choline. It carries out the reaction a 1-acyl-sn-glycero-3-phosphoethanolamine = a 1-acyl-sn-glycero-2,3-cyclic phosphate + ethanolamine. In terms of biological role, dermonecrotic toxins cleave the phosphodiester linkage between the phosphate and headgroup of certain phospholipids (sphingolipid and lysolipid substrates), forming an alcohol (often choline) and a cyclic phosphate. Acts on sphingomyelin (SM). It may also act on ceramide phosphoethanolamine (CPE), lysophosphatidylcholine (LPC) and lysophosphatidylethanolamine (LPE), but not on lysophosphatidylserine (LPS), and lysophosphatidylglycerol (LPG). It acts by transphosphatidylation, releasing exclusively cyclic phosphate products as second products. Induces dermonecrosis, hemolysis, increased vascular permeability, edema, inflammatory response, and platelet aggregation. This chain is Dermonecrotic toxin SPH (SPH), found in Ixodes scapularis (Black-legged tick).